The sequence spans 473 residues: Venom prothrombin activator vestarin-D1 (473 aa).

The signal sequence occupies residues 1-20; sequence MAPQLLLCLIQTFLWSLPEA. A propeptide spanning residues 21-40 is cleaved from the precursor; that stretch reads ESNVFLKSNVANRFLQRTKR. Residues 41 to 86 form the Gla domain; it reads ANSGFEEIYPANFERECVEERCSKEEAREVFEDDEKTEAFWTVYVD. 4-carboxyglutamate is present on residues Glu46, Glu47, Glu54, Glu56, Glu59, Glu60, Glu65, Glu66, Glu69, Glu72, and Glu75. The cysteines at positions 57 and 62 are disulfide-linked. The region spanning 86 to 122 is the EGF-like 1; calcium-binding domain; it reads DGDQCLSNPCHYGGTCKDGIGSYTCTCLAGYEGKNCE. Intrachain disulfides connect Cys90–Cys101, Cys95–Cys110, Cys112–Cys121, Cys129–Cys140, Cys136–Cys149, Cys151–Cys164, Cys172–Cys335, Cys235–Cys240, Cys383–Cys397, and Cys408–Cys436. Residue Ser92 is glycosylated (O-linked (Hex...) serine). One can recognise an EGF-like 2 domain in the interval 129 to 164; it reads CRVDNGNCWHFCKPVQNDTQCSCAEGYRLGDNGFSC. Positions 182-228 are cleaved as a propeptide — activation peptide; that stretch reads REASLPDFQTDFSDDYDAIDENNLIETVQSQSATLLKKSDNPNPDIR. The 232-residue stretch at 229–460 folds into the Peptidase S1 domain; the sequence is IVNGLDCKLG…FLPWIKTIMR (232 aa). Residue His270 is the Charge relay system of the active site. The N-linked (GlcNAc...) asparagine glycan is linked to Asn273. The active-site Charge relay system is the Asp315. Residue Ser412 is the Charge relay system of the active site.

It belongs to the peptidase S1 family. Snake venom subfamily. As to quaternary structure, heterodimer of a light chain and a heavy chain; disulfide-linked. The vitamin K-dependent, enzymatic carboxylation of some glutamate residues allows the modified protein to bind calcium. As to expression, expressed by the venom gland.

It is found in the secreted. It carries out the reaction Selective cleavage of Arg-|-Thr and then Arg-|-Ile bonds in prothrombin to form thrombin.. Snake prothrombin activator that attacks the hemostatic system of prey. This protein is functionally similar to blood coagulation factor Xa. The sequence is that of Venom prothrombin activator vestarin-D1 from Demansia vestigiata (Lesser black whip snake).